An 84-amino-acid polypeptide reads, in one-letter code: Cell division topological specificity factor (84 aa).

This sequence belongs to the MinE family.

Functionally, prevents the cell division inhibition by proteins MinC and MinD at internal division sites while permitting inhibition at polar sites. This ensures cell division at the proper site by restricting the formation of a division septum at the midpoint of the long axis of the cell. In Cupriavidus metallidurans (strain ATCC 43123 / DSM 2839 / NBRC 102507 / CH34) (Ralstonia metallidurans), this protein is Cell division topological specificity factor.